Reading from the N-terminus, the 1169-residue chain is Polyamine-transporting ATPase 13A2 (1169 aa).

At 1-44 (MSADSSLLMGSTPPSYGTLTTGTSIDPLSSSASSVRLSGYCGSP) the chain is on the cytoplasmic side. An intramembrane segment occupies 45–65 (WRAIGYHAAVWMLAGIPWLLF). Residues 66-225 (RWKPLWGVRL…ISIPVKSYLQ (160 aa)) lie on the Cytoplasmic side of the membrane. Residues 226–246 (LLADEALNPYYGFQAFSIALW) traverse the membrane as a helical segment. Residues 247-250 (LADH) lie on the Lumenal side of the membrane. A helical membrane pass occupies residues 251-271 (YYWYALCIFLISAISICLALY). Over 272 to 422 (KTRKQSLTLR…SFKFYKHSMK (151 aa)) the chain is Cytoplasmic. The helical transmembrane segment at 423 to 443 (FVAALSVLALLGTVYSIIILY) threads the bilayer. Residues 444 to 458 (RNRVPVREIVIRALD) lie on the Lumenal side of the membrane. The helical transmembrane segment at 459 to 479 (LVTVVVPPALPAAMTVCTLYA) threads the bilayer. At 480–919 (QSRLRTQGIF…REGRCSLDTS (440 aa)) the chain is on the cytoplasmic side. Aspartate 508 functions as the 4-aspartylphosphate intermediate in the catalytic mechanism. Mg(2+)-binding residues include aspartate 867 and aspartate 871. The helical transmembrane segment at 920 to 940 (FSVFKYMALYSLTQFISVLIL) threads the bilayer. Topologically, residues 941–946 (YTINTN) are lumenal. The chain crosses the membrane as a helical span at residues 947–967 (LGDLQFLAIDLVITTTVAVLM). Over 968–993 (SRTGPALTLVRARPPGALLSVPVLGS) the chain is Cytoplasmic. The chain crosses the membrane as a helical span at residues 994 to 1014 (LLLQVALVAGIQLGGYFLVIA). Residues 1015-1037 (QPWFVPLNRTVPAPDNLPNYENT) are Lumenal-facing. An N-linked (GlcNAc...) asparagine glycan is attached at asparagine 1022. Residues 1038–1058 (VVFSLSGFQYLILAAAVSKGA) traverse the membrane as a helical segment. Topologically, residues 1059–1069 (PFRQPLYTNVP) are cytoplasmic. Residues 1070 to 1090 (FLVALALLGSVLVGLILVPGL) traverse the membrane as a helical segment. Over 1091–1106 (LQGPLGLRNIVDSSFK) the chain is Lumenal. A helical transmembrane segment spans residues 1107 to 1127 (LLLLGLVAFNFVGAFMLESVL). Topologically, residues 1128–1169 (DQCLPACLRWLRPKRASKKQFKRLQQELAEHPWPTLPVGSVR) are cytoplasmic.

The protein belongs to the cation transport ATPase (P-type) (TC 3.A.3) family. Type V subfamily. Interacts with MYCBP2; the interaction inhibits the ubiquitination of TSC2 by MYCBP2. Interacts with HDAC6; the interaction results in recruitment of HDAC6 to lysosomes to promote CTTN deacetylation. Autophosphorylated. Accumulates in an inactive autophosphorylated state and autophosphorylation is stimulated by phosphatidic acid and phosphatidylinositol 3,5-bisphosphate but not by Mn(2+) or Zn(2+). The presence of spermine results in a dose-dependent reduction in autophosphorylation.

The protein localises to the lysosome membrane. It is found in the late endosome membrane. The protein resides in the endosome. Its subcellular location is the multivesicular body membrane. It localises to the cytoplasmic vesicle. The protein localises to the autophagosome membrane. It carries out the reaction spermidine(out) + ATP + H2O = spermidine(in) + ADP + phosphate + H(+). It catalyses the reaction spermine(out) + ATP + H2O = spermine(in) + ADP + phosphate + H(+). Its activity is regulated as follows. Accumulates in an inactive autophosphorylated state. The presence of spermine results in a dose-dependent reduction in autophosphorylation. Its function is as follows. ATPase which acts as a lysosomal polyamine exporter with high affinity for spermine. Also stimulates cellular uptake of polyamines and protects against polyamine toxicity. Plays a role in intracellular cation homeostasis and the maintenance of neuronal integrity. Contributes to cellular zinc homeostasis. Confers cellular protection against Mn(2+) and Zn(2+) toxicity and mitochondrial stress. Required for proper lysosomal and mitochondrial maintenance. Regulates the autophagy-lysosome pathway through the control of SYT11 expression at both transcriptional and post-translational levels. Facilitates recruitment of deacetylase HDAC6 to lysosomes to deacetylate CTTN, leading to actin polymerization, promotion of autophagosome-lysosome fusion and completion of autophagy. Promotes secretion of exosomes as well as secretion of SCNA via exosomes. Plays a role in lipid homeostasis. In Mus musculus (Mouse), this protein is Polyamine-transporting ATPase 13A2.